The chain runs to 292 residues: Outer membrane protein assembly factor BamD (292 aa).

The N-terminal stretch at 1-26 (MIQRPTFFTPTHLLAMLLATFVLITG) is a signal peptide. Cysteine 27 carries N-palmitoyl cysteine lipidation. Residue cysteine 27 is the site of S-diacylglycerol cysteine attachment.

This sequence belongs to the BamD family. As to quaternary structure, part of the Bam complex.

The protein resides in the cell outer membrane. Part of the outer membrane protein assembly complex, which is involved in assembly and insertion of beta-barrel proteins into the outer membrane. The protein is Outer membrane protein assembly factor BamD of Xylella fastidiosa (strain 9a5c).